Consider the following 83-residue polypeptide: Cytochrome b559 subunit alpha (83 aa).

A helical membrane pass occupies residues 21-35 (VIHSITIPSLFIAGW). H23 lines the heme pocket.

Belongs to the PsbE/PsbF family. Heterodimer of an alpha subunit and a beta subunit. PSII is composed of 1 copy each of membrane proteins PsbA, PsbB, PsbC, PsbD, PsbE, PsbF, PsbH, PsbI, PsbJ, PsbK, PsbL, PsbM, PsbT, PsbX, PsbY, PsbZ, Psb30/Ycf12, at least 3 peripheral proteins of the oxygen-evolving complex and a large number of cofactors. It forms dimeric complexes. The cofactor is heme b.

It localises to the plastid. It is found in the chloroplast thylakoid membrane. This b-type cytochrome is tightly associated with the reaction center of photosystem II (PSII). PSII is a light-driven water:plastoquinone oxidoreductase that uses light energy to abstract electrons from H(2)O, generating O(2) and a proton gradient subsequently used for ATP formation. It consists of a core antenna complex that captures photons, and an electron transfer chain that converts photonic excitation into a charge separation. The sequence is that of Cytochrome b559 subunit alpha from Psilotum nudum (Whisk fern).